A 152-amino-acid chain; its full sequence is Transcriptional regulator MraZ (152 aa).

SpoVT-AbrB domains lie at 5–52 and 81–124; these read ATMV…TLPA and ASEC…DEQT.

The protein belongs to the MraZ family. Forms oligomers.

The protein localises to the cytoplasm. The protein resides in the nucleoid. Functionally, negatively regulates its own expression and that of the subsequent genes in the proximal part of the division and cell wall (dcw) gene cluster. Acts by binding directly to DNA. May also regulate the expression of genes outside the dcw cluster. This Yersinia enterocolitica serotype O:8 / biotype 1B (strain NCTC 13174 / 8081) protein is Transcriptional regulator MraZ.